A 206-amino-acid chain; its full sequence is Thiamine-phosphate synthase (206 aa).

4-amino-2-methyl-5-(diphosphooxymethyl)pyrimidine-binding positions include 38–42 and Asn-70; that span reads QLRAK. Mg(2+) contacts are provided by Asp-71 and Asp-90. Ser-107 is a binding site for 4-amino-2-methyl-5-(diphosphooxymethyl)pyrimidine. 133-135 is a 2-[(2R,5Z)-2-carboxy-4-methylthiazol-5(2H)-ylidene]ethyl phosphate binding site; sequence TTT. Lys-136 lines the 4-amino-2-methyl-5-(diphosphooxymethyl)pyrimidine pocket. 2-[(2R,5Z)-2-carboxy-4-methylthiazol-5(2H)-ylidene]ethyl phosphate is bound by residues Gly-164 and 184–185; that span reads VS.

This sequence belongs to the thiamine-phosphate synthase family. It depends on Mg(2+) as a cofactor.

The catalysed reaction is 2-[(2R,5Z)-2-carboxy-4-methylthiazol-5(2H)-ylidene]ethyl phosphate + 4-amino-2-methyl-5-(diphosphooxymethyl)pyrimidine + 2 H(+) = thiamine phosphate + CO2 + diphosphate. It catalyses the reaction 2-(2-carboxy-4-methylthiazol-5-yl)ethyl phosphate + 4-amino-2-methyl-5-(diphosphooxymethyl)pyrimidine + 2 H(+) = thiamine phosphate + CO2 + diphosphate. The enzyme catalyses 4-methyl-5-(2-phosphooxyethyl)-thiazole + 4-amino-2-methyl-5-(diphosphooxymethyl)pyrimidine + H(+) = thiamine phosphate + diphosphate. It participates in cofactor biosynthesis; thiamine diphosphate biosynthesis; thiamine phosphate from 4-amino-2-methyl-5-diphosphomethylpyrimidine and 4-methyl-5-(2-phosphoethyl)-thiazole: step 1/1. Its function is as follows. Condenses 4-methyl-5-(beta-hydroxyethyl)thiazole monophosphate (THZ-P) and 2-methyl-4-amino-5-hydroxymethyl pyrimidine pyrophosphate (HMP-PP) to form thiamine monophosphate (TMP). This is Thiamine-phosphate synthase from Herpetosiphon aurantiacus (strain ATCC 23779 / DSM 785 / 114-95).